Reading from the N-terminus, the 1226-residue chain is Integrin alpha pat-2 (1226 aa).

A signal peptide spans 1–25; sequence MREGSFPRRIGLLLGLLGLLAGVAT. Over 26–1154 the chain is Extracellular; sequence FNIDTKNVVV…IASEEGRDLP (1129 aa). 7 FG-GAP repeats span residues 27 to 94, 108 to 171, 178 to 233, 234 to 290, 291 to 345, 362 to 421, and 425 to 488; these read NIDT…TCRE, NGSH…NAEE, EPAR…TDRP, NTEY…MMIN, LTDE…KPQY, GKQI…GVRE, and QKIE…PESA. Asn108, Asn228, and Asn290 each carry an N-linked (GlcNAc...) asparagine glycan. Asn608 carries an N-linked (GlcNAc...) asparagine glycan. Positions 620–622 match the Cell attachment site motif; it reads RGD. An N-linked (GlcNAc...) asparagine glycan is attached at Asn679. Positions 709–733 are disordered; that stretch reads SVGGDGSKSAPACSPTSDEPDSDGK. Residues Asn775 and Asn819 are each glycosylated (N-linked (GlcNAc...) asparagine). Disordered stretches follow at residues 898 to 958 and 982 to 1040; these read LRIT…HVYE and DYEY…ARFS. The segment covering 920–931 has biased composition (acidic residues); that stretch reads REEDDESYEDET. A compositionally biased stretch (low complexity) spans 932 to 951; it reads TTQSQSTRHQSTQHQTHHQS. Over residues 985–1005 the composition is skewed to acidic residues; that stretch reads YIPDDQEYDGDDFEEEDDEDF. A compositionally biased stretch (basic residues) spans 1010–1026; that stretch reads SKRVKRNPTPKKKKKGG. The segment covering 1027–1040 has biased composition (basic and acidic residues); sequence EHRGEPRSDKARFS. The chain crosses the membrane as a helical span at residues 1155 to 1177; sequence WWLYLLAILIGLAILILLILLLW. The Cytoplasmic segment spans residues 1178–1226; it reads RCGFFKRNRPPTEHAELRADRQPNAQYADSQSRYTSQDQYNQGRHGQML. The segment at 1191–1226 is disordered; sequence HAELRADRQPNAQYADSQSRYTSQDQYNQGRHGQML. Residues 1200–1226 are compositionally biased toward polar residues; sequence PNAQYADSQSRYTSQDQYNQGRHGQML.

The protein belongs to the integrin alpha chain family. In terms of assembly, heterodimer of an alpha and a beta subunit. Interacts with beta subunit pat-3. Interacts with dep-1. Component of an integrin containing attachment complex, composed of at least pat-2, pat-3, pat-4, pat-6, unc-52, unc-97 and unc-112. Expressed in body-wall muscle cells, distal tip cells, and vulval tissue.

The protein resides in the membrane. Functionally, required for muscle development probably through the regulation of the actin-myosin cytoskeleton. Component of an integrin containing attachment complex, which is required for muscle maintenance. During the formation of neuromuscular junctions at the larval stage, negatively regulates membrane protrusion from body wall muscles, probably through lamins such as epi-1, lam-2 and unc-52. Required for distal tip cell migration and dorsal pathfinding. Required for egg-laying. May play a role in cell motility and cell-cell interactions. Plays a role in vulval development. Probably within the alpha pat-2/beta pat-3 integrin receptor complex, plays a role in the negative regulation of let-23 signaling and vulval induction. This is probably partly by restricting the mobility of the let-23 receptor on the plasma membrane of vulval cells which thereby attenuates let-23 signaling. This Caenorhabditis elegans protein is Integrin alpha pat-2.